Reading from the N-terminus, the 201-residue chain is FMN-dependent NADH:quinone oxidoreductase (201 aa).

Residues Ser10, 16–18 (SQS), 96–99 (MYNF), and 140–143 (SRGG) each bind FMN.

Belongs to the azoreductase type 1 family. In terms of assembly, homodimer. FMN is required as a cofactor.

It catalyses the reaction 2 a quinone + NADH + H(+) = 2 a 1,4-benzosemiquinone + NAD(+). The enzyme catalyses N,N-dimethyl-1,4-phenylenediamine + anthranilate + 2 NAD(+) = 2-(4-dimethylaminophenyl)diazenylbenzoate + 2 NADH + 2 H(+). Its function is as follows. Quinone reductase that provides resistance to thiol-specific stress caused by electrophilic quinones. Functionally, also exhibits azoreductase activity. Catalyzes the reductive cleavage of the azo bond in aromatic azo compounds to the corresponding amines. This chain is FMN-dependent NADH:quinone oxidoreductase, found in Salmonella arizonae (strain ATCC BAA-731 / CDC346-86 / RSK2980).